A 219-amino-acid polypeptide reads, in one-letter code: Ribose-5-phosphate isomerase A (219 aa).

Substrate-binding positions include 28–31 (TGST), 81–84 (DGAD), and 94–97 (KGGG). Glutamate 103 functions as the Proton acceptor in the catalytic mechanism. Residue lysine 121 participates in substrate binding.

It belongs to the ribose 5-phosphate isomerase family. Homodimer.

The catalysed reaction is aldehydo-D-ribose 5-phosphate = D-ribulose 5-phosphate. The protein operates within carbohydrate degradation; pentose phosphate pathway; D-ribose 5-phosphate from D-ribulose 5-phosphate (non-oxidative stage): step 1/1. Catalyzes the reversible conversion of ribose-5-phosphate to ribulose 5-phosphate. This chain is Ribose-5-phosphate isomerase A, found in Edwardsiella ictaluri (strain 93-146).